Consider the following 185-residue polypeptide: uncharacterized protein (185 aa).

The signal sequence occupies residues 1–18; that stretch reads MLLKLILILCFLVTLSLS. The interval 30 to 185 is disordered; the sequence is TQGPTIASGG…VQDCGEITGW (156 aa). Over residues 86–101 the composition is skewed to basic and acidic residues; that stretch reads RAQEGGKKDTTKEQPK. Residues 103–116 are compositionally biased toward low complexity; it reads NNNNKNLGRHSSSG. The span at 117-135 shows a compositional bias: gly residues; that stretch reads SGSGSGSGCGVTGDTGTGS.

The protein resides in the secreted. This is an uncharacterized protein from Dictyostelium discoideum (Social amoeba).